A 299-amino-acid chain; its full sequence is Protein U23 (299 aa).

Residues 1-27 (MRKSEFNAKSCFLMIGICVFNLNSSSC) form the signal peptide. Residues 247-267 (LVIWICGISFVGAFIIVIVIL) form a helical membrane-spanning segment.

The protein resides in the host membrane. The chain is Protein U23 (U23) from Human herpesvirus 6B (strain Z29) (HHV-6 variant B).